The chain runs to 334 residues: ADP-L-glycero-D-manno-heptose-6-epimerase (334 aa).

NADP(+)-binding positions include 11-12 (FI), 32-33 (DN), Lys39, Lys54, 77-81 (QGACS), and Asn94. The active-site Proton acceptor is Tyr141. Residue Lys145 participates in NADP(+) binding. Asn171 serves as a coordination point for substrate. NADP(+) is bound by residues Val172 and Lys180. Lys180 functions as the Proton acceptor in the catalytic mechanism. Substrate is bound by residues Arg182, His189, 203 to 206 (FGSN), Arg216, and Tyr295.

It belongs to the NAD(P)-dependent epimerase/dehydratase family. HldD subfamily. As to quaternary structure, homopentamer. The cofactor is NADP(+).

It catalyses the reaction ADP-D-glycero-beta-D-manno-heptose = ADP-L-glycero-beta-D-manno-heptose. It participates in nucleotide-sugar biosynthesis; ADP-L-glycero-beta-D-manno-heptose biosynthesis; ADP-L-glycero-beta-D-manno-heptose from D-glycero-beta-D-manno-heptose 7-phosphate: step 4/4. Its pathway is bacterial outer membrane biogenesis; LOS core biosynthesis. In terms of biological role, catalyzes the interconversion between ADP-D-glycero-beta-D-manno-heptose and ADP-L-glycero-beta-D-manno-heptose via an epimerization at carbon 6 of the heptose. The sequence is that of ADP-L-glycero-D-manno-heptose-6-epimerase from Neisseria meningitidis serogroup A / serotype 4A (strain DSM 15465 / Z2491).